The sequence spans 24 residues: Brevinin-1SPc (24 aa).

A disulfide bridge connects residues cysteine 18 and cysteine 24.

As to expression, expressed by the skin glands.

Its subcellular location is the secreted. In terms of biological role, antimicrobial peptide with activity against Gram-negative and Gram-positive bacteria and fungi. Also shows hemolytic activity. The protein is Brevinin-1SPc of Lithobates septentrionalis (Mink frog).